A 151-amino-acid polypeptide reads, in one-letter code: Deoxyuridine 5'-triphosphate nucleotidohydrolase (151 aa).

Residues 70-72, Asn83, 87-89, and Met97 each bind substrate; these read RSG and LID.

It belongs to the dUTPase family. Requires Mg(2+) as cofactor.

The enzyme catalyses dUTP + H2O = dUMP + diphosphate + H(+). It participates in pyrimidine metabolism; dUMP biosynthesis; dUMP from dCTP (dUTP route): step 2/2. In terms of biological role, this enzyme is involved in nucleotide metabolism: it produces dUMP, the immediate precursor of thymidine nucleotides and it decreases the intracellular concentration of dUTP so that uracil cannot be incorporated into DNA. This is Deoxyuridine 5'-triphosphate nucleotidohydrolase from Pasteurella multocida (strain Pm70).